The sequence spans 247 residues: tRNA pseudouridine synthase A (247 aa).

The Nucleophile role is filled by Asp-52. Tyr-113 is a binding site for substrate.

Belongs to the tRNA pseudouridine synthase TruA family. In terms of assembly, homodimer.

The enzyme catalyses uridine(38/39/40) in tRNA = pseudouridine(38/39/40) in tRNA. Its function is as follows. Formation of pseudouridine at positions 38, 39 and 40 in the anticodon stem and loop of transfer RNAs. This Bartonella henselae (strain ATCC 49882 / DSM 28221 / CCUG 30454 / Houston 1) (Rochalimaea henselae) protein is tRNA pseudouridine synthase A.